Consider the following 580-residue polypeptide: Proline--tRNA ligase (580 aa).

Belongs to the class-II aminoacyl-tRNA synthetase family. ProS type 1 subfamily. As to quaternary structure, homodimer.

It localises to the cytoplasm. The enzyme catalyses tRNA(Pro) + L-proline + ATP = L-prolyl-tRNA(Pro) + AMP + diphosphate. Catalyzes the attachment of proline to tRNA(Pro) in a two-step reaction: proline is first activated by ATP to form Pro-AMP and then transferred to the acceptor end of tRNA(Pro). As ProRS can inadvertently accommodate and process non-cognate amino acids such as alanine and cysteine, to avoid such errors it has two additional distinct editing activities against alanine. One activity is designated as 'pretransfer' editing and involves the tRNA(Pro)-independent hydrolysis of activated Ala-AMP. The other activity is designated 'posttransfer' editing and involves deacylation of mischarged Ala-tRNA(Pro). The misacylated Cys-tRNA(Pro) is not edited by ProRS. This Mycobacteroides abscessus (strain ATCC 19977 / DSM 44196 / CCUG 20993 / CIP 104536 / JCM 13569 / NCTC 13031 / TMC 1543 / L948) (Mycobacterium abscessus) protein is Proline--tRNA ligase.